The sequence spans 1029 residues: Eukaryotic translation initiation factor 3 subunit A (1029 aa).

Positions 92-121 (LKKFIELAEQKVTEAQAKADEIQSSLESAA) form a coiled coil. The 185-residue stretch at 339–523 (MTKAASFVLL…GVLTFESDIF (185 aa)) folds into the PCI domain. The stretch at 606-903 (TRRAIIEKRK…EEEAEQRRAA (298 aa)) forms a coiled coil. Composition is skewed to basic and acidic residues over residues 621–632 (ALQKKQREEENR), 644–666 (EQQRLLDEHRERERKRMKDEQDR), 797–901 (TEKR…EQRR), and 913–924 (GPAREASPERTA). Disordered stretches follow at residues 621-666 (ALQK…EQDR) and 797-1029 (TEKR…KQQQ). Residues 943 to 960 (AKAAASAGEQPAAAQEAT) show a composition bias toward low complexity. Over residues 977-993 (ATRDGPSDSRDLSHARE) the composition is skewed to basic and acidic residues.

It belongs to the eIF-3 subunit A family. In terms of assembly, component of the eukaryotic translation initiation factor 3 (eIF-3) complex.

It is found in the cytoplasm. RNA-binding component of the eukaryotic translation initiation factor 3 (eIF-3) complex, which is involved in protein synthesis of a specialized repertoire of mRNAs and, together with other initiation factors, stimulates binding of mRNA and methionyl-tRNAi to the 40S ribosome. The eIF-3 complex specifically targets and initiates translation of a subset of mRNAs involved in cell proliferation. The chain is Eukaryotic translation initiation factor 3 subunit A from Coccidioides immitis (strain RS) (Valley fever fungus).